Consider the following 557-residue polypeptide: Putative glutathione-regulated potassium-efflux system protein KefB (557 aa).

10 helical membrane-spanning segments follow: residues 2-22 (LGYLLAGIAIGPWGLGFISDV), 24-44 (EILHFSELGVVFLMFIIGLEL), 56-76 (IFGVGAAQVLLSAALLAGLLM), 84-104 (AAVVGGIGFAMSSTAMALQLM), 121-141 (VLLFQDLAVIPALALVPLLAG), 146-166 (HFDWMKIGMKVLEFVGMLIGG), 176-196 (FIAASGVREVFTAATLLLVLG), 199-219 (LFMDALGLSMALGTFIAGVLL), 237-257 (GLLLGLFFISVGMSLNLGVLY), and 260-280 (LLWVVISVVVLVAVKILVLYL). Positions 356–475 (KPQVIVVGFG…AGVTQFSRET (120 aa)) constitute an RCK N-terminal domain.

Belongs to the monovalent cation:proton antiporter 2 (CPA2) transporter (TC 2.A.37) family. KefB subfamily. Interacts with the regulatory subunit KefG.

The protein localises to the cell inner membrane. Its function is as follows. Pore-forming subunit of a potassium efflux system that confers protection against electrophiles. Catalyzes K(+)/H(+) antiport. The protein is Putative glutathione-regulated potassium-efflux system protein KefB of Shigella flexneri.